Reading from the N-terminus, the 165-residue chain is Large ribosomal subunit protein uL11 (165 aa).

Arginine 67 bears the N5-methylarginine mark.

It belongs to the universal ribosomal protein uL11 family. As to quaternary structure, component of the large ribosomal subunit (LSU). Mature N.crassa ribosomes consist of a small (40S) and a large (60S) subunit. The 40S small subunit contains 1 molecule of ribosomal RNA (18S rRNA) and at least 32 different proteins. The large 60S subunit contains 3 rRNA molecules (26S, 5.8S and 5S rRNA) and at least 42 different proteins.

It is found in the cytoplasm. Functionally, component of the ribosome, a large ribonucleoprotein complex responsible for the synthesis of proteins in the cell. The small ribosomal subunit (SSU) binds messenger RNAs (mRNAs) and translates the encoded message by selecting cognate aminoacyl-transfer RNA (tRNA) molecules. The large subunit (LSU) contains the ribosomal catalytic site termed the peptidyl transferase center (PTC), which catalyzes the formation of peptide bonds, thereby polymerizing the amino acids delivered by tRNAs into a polypeptide chain. The nascent polypeptides leave the ribosome through a tunnel in the LSU and interact with protein factors that function in enzymatic processing, targeting, and the membrane insertion of nascent chains at the exit of the ribosomal tunnel. The sequence is that of Large ribosomal subunit protein uL11 (rpl-12) from Neurospora crassa (strain ATCC 24698 / 74-OR23-1A / CBS 708.71 / DSM 1257 / FGSC 987).